A 1349-amino-acid polypeptide reads, in one-letter code: ABC multidrug transporter mdr1 (1349 aa).

The segment at 1-62 (MPAPETGASS…PDGKQKDHGK (62 aa)) is disordered. The segment covering 35-45 (DNEKPHDHHSL) has biased composition (basic and acidic residues). A run of 4 helical transmembrane segments spans residues 108–128 (ILII…LPLF), 162–182 (YFVY…VGFI), 234–254 (KVGL…VAYV), and 257–277 (WKLA…MGGG). The ABC transmembrane type-1 1 domain maps to 112 to 402 (LVSAICAIAA…VAPNGQAFTN (291 aa)). N-linked (GlcNAc...) asparagine glycosylation occurs at Asn-308. Transmembrane regions (helical) follow at residues 339–359 (ILGM…GLGF) and 371–391 (VNVG…FSLG). Positions 437-682 (IEFRNVKHIY…KGTYYKLVEA (246 aa)) constitute an ABC transporter 1 domain. 472 to 479 (GPSGSGKS) contacts ATP. The next 2 helical transmembrane spans lie at 779–799 (MLIG…QAFL) and 828–848 (FFVV…AFAI). An ABC transmembrane type-1 2 domain is found at 780-1069 (LIGLTFSFLA…VFSFAPDMGK (290 aa)). N-linked (GlcNAc...) asparagine glycans are attached at residues Asn-878 and Asn-893. Helical transmembrane passes span 896-916 (GVSG…GAAM), 926-948 (LALV…FYML), 1016-1036 (ALVF…LGHH), and 1043-1063 (FFVC…VFSF). The 239-residue stretch at 1104–1342 (IEFRDVHFRY…KGRYYELVNL (239 aa)) folds into the ABC transporter 2 domain. Asn-1126 carries an N-linked (GlcNAc...) asparagine glycan. 1139–1146 (GPSGCGKS) is a binding site for ATP.

It belongs to the ABC transporter superfamily. ABCB family. Multidrug resistance exporter (TC 3.A.1.201) subfamily.

It localises to the cell membrane. The catalysed reaction is voriconazole(in) + ATP + H2O = voriconazole(out) + ADP + phosphate + H(+). Its function is as follows. Pleiotropic ABC efflux transporter that may be involved in A.fumigatus adaptation to azoles such as vorizonazole. The protein is ABC multidrug transporter mdr1 of Aspergillus fumigatus (strain ATCC MYA-4609 / CBS 101355 / FGSC A1100 / Af293) (Neosartorya fumigata).